Consider the following 238-residue polypeptide: Cysteine-rich venom protein pseudechetoxin-like (238 aa).

An N-terminal signal peptide occupies residues 1-19 (MIAFTVLLSLAAVLQQSSG). Positions 20–28 (TVDFASESS) are excised as a propeptide. Residues 38–164 (VDKHNDLRRS…STKYLYVCQY (127 aa)) enclose the SCP domain. Disulfide bonds link cysteine 75-cysteine 153, cysteine 92-cysteine 165, cysteine 148-cysteine 162, cysteine 184-cysteine 191, cysteine 187-cysteine 196, cysteine 200-cysteine 233, cysteine 209-cysteine 227, and cysteine 218-cysteine 231. Positions 200-233 (CKHNNDFSNCKALAKKSKCQTEWIKSKCPATCFC) constitute a ShKT domain.

This sequence belongs to the CRISP family. In terms of tissue distribution, expressed by the venom gland.

The protein localises to the secreted. In terms of biological role, blocks olfactory (CNGA2) and retinal (CNGA1) CNG channel currents. Does not affect neither depolarization- nor caffeine-induced contraction of smooth muscle. This chain is Cysteine-rich venom protein pseudechetoxin-like, found in Oxyuranus scutellatus scutellatus (Australian taipan).